A 462-amino-acid polypeptide reads, in one-letter code: Cytochrome P450 20A1 (462 aa).

Residues 4-24 (FAIFAVTFLLALVGAVLYLYP) form a helical membrane-spanning segment. Cys409 lines the heme pocket.

Belongs to the cytochrome P450 family. Requires heme as cofactor.

The protein localises to the membrane. This is Cytochrome P450 20A1 (CYP20A1) from Homo sapiens (Human).